The following is a 65-amino-acid chain: Large ribosomal subunit protein uL29 (65 aa).

The protein belongs to the universal ribosomal protein uL29 family.

The chain is Large ribosomal subunit protein uL29 from Desulforamulus reducens (strain ATCC BAA-1160 / DSM 100696 / MI-1) (Desulfotomaculum reducens).